Consider the following 165-residue polypeptide: MTNKKRRQRGSRTHGGGTHKNRRGAGHRGGRGAAGRAKHEFHNYGPLGKYGFKRPESAQTEVLEVTVQKLDEDAALYAADDLAEEDGDAYVIDARDVVEDGYEADVVKVLGGGQVRRELRVTADAFTAGAVELIEEAGGEATLSERAEEAADESENTSDDEDDEA.

Over residues 1-30 the composition is skewed to basic residues; that stretch reads MTNKKRRQRGSRTHGGGTHKNRRGAGHRGG. 2 disordered regions span residues 1–39 and 137–165; these read MTNKKRRQRGSRTHGGGTHKNRRGAGHRGGRGAAGRAKH and AGGEATLSERAEEAADESENTSDDEDDEA. The segment covering 150-165 has biased composition (acidic residues); that stretch reads AADESENTSDDEDDEA.

It belongs to the universal ribosomal protein uL15 family. In terms of assembly, part of the 50S ribosomal subunit.

In terms of biological role, binds to the 23S rRNA. In Halorubrum lacusprofundi (strain ATCC 49239 / DSM 5036 / JCM 8891 / ACAM 34), this protein is Large ribosomal subunit protein uL15.